The primary structure comprises 428 residues: Bacteriochlorophyll synthase 44.5 kDa chain (428 aa).

Helical transmembrane passes span 3–23, 32–52, 73–93, 115–135, 144–164, 172–192, 225–245, 269–289, 291–311, 317–337, 358–378, and 393–413; these read LGWLQIFRLGLVQLCIGAVVV, LMVVELALPAVLPGALVALHY, FFVILGMAVLALGAFLAAVAV, GFGVGASGTSLLALLASATEP, ITWLLMIFGIAVTAGTVGHFL, LLWIVAIVTLGAVVLTTLAVW, AFTFFLFLSMTAYFLQELILE, GVFFGMLTVGLALSGLKIGSL, GWVVTGCLGSSLALMAIVALG, ALVPAVIGLGFFNGIFAVAAI, LWGAAQAIAAGFGGLVGAGAA, and LVFGAQALLFIVAAMMATGVV.

Belongs to the PucC family.

It localises to the membrane. It participates in porphyrin-containing compound metabolism; bacteriochlorophyll biosynthesis (light-independent). In Rhodobacter capsulatus (strain ATCC BAA-309 / NBRC 16581 / SB1003), this protein is Bacteriochlorophyll synthase 44.5 kDa chain.